The primary structure comprises 148 residues: Ribonuclease pancreatic (148 aa).

The signal sequence occupies residues 1–25 (MGLEKSLILLPLLVLVFGWVQSSLG). Substrate is bound by residues K32 and R35. The active-site Proton acceptor is the H36. Cystine bridges form between C50–C108, C64–C119, C82–C134, and C89–C96. An N-linked (GlcNAc...) asparagine glycan is attached at N58. Position 65-69 (65-69 (KPVNT)) interacts with substrate. N86 carries an N-linked (GlcNAc...) asparagine glycan. Residues K90 and R109 each coordinate substrate. The Proton donor role is filled by H143.

The protein belongs to the pancreatic ribonuclease family. As to quaternary structure, monomer. Interacts with and forms tight 1:1 complexes with RNH1. Dimerization of two such complexes may occur. Interaction with RNH1 inhibits this protein. As to expression, pancreas.

It is found in the secreted. It carries out the reaction an [RNA] containing cytidine + H2O = an [RNA]-3'-cytidine-3'-phosphate + a 5'-hydroxy-ribonucleotide-3'-[RNA].. The enzyme catalyses an [RNA] containing uridine + H2O = an [RNA]-3'-uridine-3'-phosphate + a 5'-hydroxy-ribonucleotide-3'-[RNA].. Its function is as follows. Endonuclease that catalyzes the cleavage of RNA on the 3' side of pyrimidine nucleotides. Acts on single-stranded and double-stranded RNA. In Chionomys nivalis (European snow vole), this protein is Ribonuclease pancreatic (RNASE1).